Here is a 239-residue protein sequence, read N- to C-terminus: Caffeoyl-CoA O-methyltransferase 1 (239 aa).

Lys13 provides a ligand contact to substrate. S-adenosyl-L-methionine-binding positions include Thr55, Glu77, 79-80 (GV), Ser85, Asp103, and Ala132. Substrate is bound at residue Asp155. Residue Asp155 participates in a divalent metal cation binding. Asp157 contacts S-adenosyl-L-methionine. Residues Asp181 and Asn182 each coordinate a divalent metal cation. Residue Asn186 participates in substrate binding.

This sequence belongs to the class I-like SAM-binding methyltransferase superfamily. Cation-dependent O-methyltransferase family. CCoAMT subfamily. As to quaternary structure, monomer. Mg(2+) is required as a cofactor. Mostly expressed in the bottom and middle parts of the stems.

The enzyme catalyses (E)-caffeoyl-CoA + S-adenosyl-L-methionine = (E)-feruloyl-CoA + S-adenosyl-L-homocysteine + H(+). Its pathway is aromatic compound metabolism; phenylpropanoid biosynthesis. Its function is as follows. Methylates caffeoyl-CoA to feruloyl-CoA and 5-hydroxyferuloyl-CoA to sinapoyl-CoA. Plays a role in the synthesis of feruloylated polysaccharides. Involved in the reinforcement of the plant cell wall. Also involved in the responding to wounding or pathogen challenge by the increased formation of cell wall-bound ferulic acid polymers. This Nicotiana tabacum (Common tobacco) protein is Caffeoyl-CoA O-methyltransferase 1 (CCOAOMT1).